The primary structure comprises 425 residues: Histone-binding protein RBBP4-A (425 aa).

Alanine 2 is subject to N-acetylalanine. 7 WD repeats span residues 32–125 (YDLV…THDG), 126–175 (EVNR…RLRG), 176–223 (HQKE…KTIF), 225–270 (GHTA…HSVD), 271–314 (AHTA…HSFE), 315–371 (SHKD…FIHG), and 372–404 (GHTA…VWQM).

It belongs to the WD repeat RBAP46/RBAP48/MSI1 family. In terms of assembly, binds directly to histone H4, probably via helix 1 of the histone fold, a region that is not accessible when histone H4 is in chromatin. Probably forms a large corepressor complex that contains ncor1, sin3a, hdac1-A and/or hdac1-B, hdac2, rbbp4-A and/or rbbp4-B and possibly rbbp7.

The protein resides in the nucleus. It localises to the chromosome. The protein localises to the telomere. In terms of biological role, core histone-binding subunit that may target chromatin assembly factors, chromatin remodeling factors and histone deacetylases to their histone substrates in a manner that is regulated by nucleosomal DNA. Component of several complexes which regulate chromatin metabolism. In Xenopus laevis (African clawed frog), this protein is Histone-binding protein RBBP4-A (rbbp4-a).